The sequence spans 331 residues: Biotin synthase (331 aa).

In terms of domain architecture, Radical SAM core spans 51 to 278 (QTIQLSTLMS…KSYVRLSAGR (228 aa)). Residues Cys-66, Cys-70, and Cys-73 each coordinate [4Fe-4S] cluster. Cys-110, Cys-141, Cys-201, and Arg-273 together coordinate [2Fe-2S] cluster.

This sequence belongs to the radical SAM superfamily. Biotin synthase family. In terms of assembly, homodimer. Requires [4Fe-4S] cluster as cofactor. [2Fe-2S] cluster is required as a cofactor.

The enzyme catalyses (4R,5S)-dethiobiotin + (sulfur carrier)-SH + 2 reduced [2Fe-2S]-[ferredoxin] + 2 S-adenosyl-L-methionine = (sulfur carrier)-H + biotin + 2 5'-deoxyadenosine + 2 L-methionine + 2 oxidized [2Fe-2S]-[ferredoxin]. Its pathway is cofactor biosynthesis; biotin biosynthesis; biotin from 7,8-diaminononanoate: step 2/2. Its function is as follows. Catalyzes the conversion of dethiobiotin (DTB) to biotin by the insertion of a sulfur atom into dethiobiotin via a radical-based mechanism. In Histophilus somni (strain 129Pt) (Haemophilus somnus), this protein is Biotin synthase.